The chain runs to 255 residues: UPF0246 protein Cphy_1568 (255 aa).

Belongs to the UPF0246 family.

This is UPF0246 protein Cphy_1568 from Lachnoclostridium phytofermentans (strain ATCC 700394 / DSM 18823 / ISDg) (Clostridium phytofermentans).